The following is a 185-amino-acid chain: Ribosome-recycling factor (185 aa).

It belongs to the RRF family.

It localises to the cytoplasm. Responsible for the release of ribosomes from messenger RNA at the termination of protein biosynthesis. May increase the efficiency of translation by recycling ribosomes from one round of translation to another. The sequence is that of Ribosome-recycling factor from Bacillus licheniformis (strain ATCC 14580 / DSM 13 / JCM 2505 / CCUG 7422 / NBRC 12200 / NCIMB 9375 / NCTC 10341 / NRRL NRS-1264 / Gibson 46).